The sequence spans 753 residues: Polyadenylate-binding protein, cytoplasmic and nuclear (753 aa).

The span at 1 to 26 (MSAEVSTTPAADNTVNGTPEATNAAA) shows a compositional bias: polar residues. Residues 1 to 52 (MSAEVSTTPAADNTVNGTPEATNAAATSAPEVTAVESASPSTTPSASQPHSA) form a disordered region. The segment covering 37 to 52 (SASPSTTPSASQPHSA) has biased composition (low complexity). RRM domains follow at residues 52–130 (ASLY…WSQR), 140–217 (GNVF…HHIS), 233–310 (TNVY…RAQK), and 336–460 (VNLY…LAQR). Disordered stretches follow at residues 367-417 (VMRD…TEKK) and 602-645 (MGQG…REEV). Residues 379 to 417 (ESEKEKEKESNKENEKEGEEKTEEKPKESEEEPKKTEKK) show a composition bias toward basic and acidic residues. Over residues 605-631 (GIRGPGYGQGRGGAPVQGGPRPQGGRG) the composition is skewed to gly residues. Positions 648 to 725 (TGGLTAQTLS…ALSVYDEYMK (78 aa)) constitute a PABC domain. The segment at 728–753 (GEGEAPAESAKPKEDAAETATEENKS) is disordered. Residues 737 to 753 (AKPKEDAAETATEENKS) show a composition bias toward basic and acidic residues.

This sequence belongs to the polyadenylate-binding protein type-1 family.

It localises to the cytoplasm. The protein localises to the nucleus. Its function is as follows. Binds the poly(A) tail of mRNA. Appears to be an important mediator of the multiple roles of the poly(A) tail in mRNA biogenesis, stability and translation. In the nucleus, involved in both mRNA cleavage and polyadenylation. Is also required for efficient mRNA export to the cytoplasm. Acts in concert with a poly(A)-specific nuclease (PAN) to affect poly(A) tail shortening, which may occur concomitantly with either nucleocytoplasmic mRNA transport or translational initiation. In the cytoplasm, stimulates translation initiation and regulates mRNA decay through translation termination-coupled poly(A) shortening, probably mediated by PAN. In Aspergillus fumigatus (strain ATCC MYA-4609 / CBS 101355 / FGSC A1100 / Af293) (Neosartorya fumigata), this protein is Polyadenylate-binding protein, cytoplasmic and nuclear (pab1).